The primary structure comprises 78 residues: MNVSNNAGIDSNDLAKRGESLIRKSTNRYLTTVRIAFRAKQRRFDDFDGLLEESTIKPVQRSIIELSDEQDQPDLLPG.

This sequence belongs to the RNA polymerase subunit omega family. In terms of assembly, in cyanobacteria the RNAP catalytic core is composed of 2 alpha, 1 beta, 1 beta', 1 gamma and 1 omega subunit. When a sigma factor is associated with the core the holoenzyme is formed, which can initiate transcription.

The catalysed reaction is RNA(n) + a ribonucleoside 5'-triphosphate = RNA(n+1) + diphosphate. Its function is as follows. Promotes RNA polymerase assembly. Latches the N- and C-terminal regions of the beta' subunit thereby facilitating its interaction with the beta and alpha subunits. This Prochlorococcus marinus (strain MIT 9312) protein is DNA-directed RNA polymerase subunit omega.